The following is a 341-amino-acid chain: D-aspartate oxidase (341 aa).

Position 1 is a blocked amino end (Met) (Met-1). 7 residues coordinate FAD: Asp-36, Lys-37, Thr-43, Ser-44, Met-50, Gly-307, and Ile-311. The short motif at 339–341 is the Microbody targeting signal element; the sequence is SKL.

This sequence belongs to the DAMOX/DASOX family. As to quaternary structure, monomer. Interacts with PEX5; the interaction is direct and required for localization of DDO to the peroxisome. It depends on FAD as a cofactor. In the kidney, expressed in epithelial cells of the proximal tubules and in the liver (at protein level).

The protein localises to the peroxisome matrix. It is found in the cytoplasm. Its subcellular location is the cytosol. The catalysed reaction is D-aspartate + O2 + H2O = oxaloacetate + H2O2 + NH4(+). The enzyme catalyses D-glutamate + O2 + H2O = H2O2 + 2-oxoglutarate + NH4(+). Its activity is regulated as follows. Inhibited by phenylglyoxal; chemical modification of arginine residues in the enzyme with phenylglyoxal leads to the irreversible loss of activity towards dicarboxylic D-amino acids, paralleled by a transient appearance of activity versus monocarboxylic ones. In terms of biological role, selectively catalyzes the oxidative deamination of acidic amino acids. Suppresses the level of D-aspartate in the brain, an amino acid that can act as an agonist for glutamate receptors. Protects the organism from the toxicity of D-amino acids. May also function in the intestine. In Bos taurus (Bovine), this protein is D-aspartate oxidase (DDO).